The chain runs to 389 residues: Large envelope protein (389 aa).

Position 1 is an N-acetylmethionine (methionine 1). The N-myristoyl glycine; by host moiety is linked to residue glycine 2. Residues 2 to 108 form a pre-S1 region; it reads GTNLSVPNPL…PPLRDTHPQA (107 aa). Residues 2–163 are pre-S; that stretch reads GTNLSVPNPL…LSTTGDPVPN (162 aa). At 2–170 the chain is on the virion surface; in external conformation side; the sequence is GTNLSVPNPL…VPNMENIASG (169 aa). The Intravirion; in internal conformation segment spans residues 2–242; the sequence is GTNLSVPNPL…PGYRWMCLRR (241 aa). Residues 109–163 are pre-S2; that stretch reads MQWNSTTFHQTLQDPRVRALYFPAGGSSSGTVNPVQNTASSISSILSTTGDPVPN. The helical transmembrane segment at 171–191 threads the bilayer; that stretch reads LLGPLLVLQAGFFSLTKILTI. The Intravirion; in external conformation portion of the chain corresponds to 192 to 242; the sequence is PLSLDSWWTSLNFLGETPVCLGQNSQSQISSHSPTCCPPICPGYRWMCLRR. A helical membrane pass occupies residues 243–263; it reads FIIFLCILLLCLIFLLVLLDY. The Virion surface segment spans residues 264–337; the sequence is QGMLPVCPLI…WASVRFSWLS (74 aa). N-linked (GlcNAc...) asparagine; by host glycosylation is present at asparagine 309. Residues 338–358 form a helical membrane-spanning segment; the sequence is LLVPFVQWFVGLSPTVWLSVI. At 359–364 the chain is on the intravirion side; the sequence is WMMWFW. A helical transmembrane segment spans residues 365–387; the sequence is GPSLYNILSPFMPLLPIFFCLWV. Residues 388–389 are Virion surface-facing; sequence YI.

The protein belongs to the orthohepadnavirus major surface antigen family. As to quaternary structure, interacts (via its myristoylated pre-S1 region) with the host SLC10A1/NTCP; this interaction is essential for viral entry. In its internal form (Li-HBsAg), interacts with the capsid protein and with the isoform S. Interacts with host chaperone CANX. In terms of assembly, associates with host chaperone CANX through its pre-S2 N glycan; this association may be essential for isoform M proper secretion. As to quaternary structure, interacts with isoform L. Interacts with the antigens of satellite virus HDV (HDVAgs); this interaction is required for encapsidation of HDV genomic RNA. In terms of processing, isoform M is N-terminally acetylated by host at a ratio of 90%, and N-glycosylated by host at the pre-S2 region. Myristoylated; this modification is essential for its interaction with the host protein SLC10A1/NTCP.

Its subcellular location is the virion membrane. Functionally, the large envelope protein exists in two topological conformations, one which is termed 'external' or Le-HBsAg and the other 'internal' or Li-HBsAg. In its external conformation the protein attaches the virus to cell receptors and thereby initiating infection. This interaction determines the species specificity and liver tropism. This attachment induces virion internalization predominantly through caveolin-mediated endocytosis. The large envelope protein also assures fusion between virion membrane and endosomal membrane. In its internal conformation the protein plays a role in virion morphogenesis and mediates the contact with the nucleocapsid like a matrix protein. The middle envelope protein plays an important role in the budding of the virion. It is involved in the induction of budding in a nucleocapsid independent way. In this process the majority of envelope proteins bud to form subviral lipoprotein particles of 22 nm of diameter that do not contain a nucleocapsid. The protein is Large envelope protein of Hepatitis B virus genotype B2 (isolate Indonesia/pIDW420/1988) (HBV-B).